A 424-amino-acid polypeptide reads, in one-letter code: Serine--tRNA ligase (424 aa).

232 to 234 (TAE) is a binding site for L-serine. 263–265 (RRE) is a binding site for ATP. Glutamate 286 contacts L-serine. 350–353 (EISS) provides a ligand contact to ATP. An L-serine-binding site is contributed by serine 384.

Belongs to the class-II aminoacyl-tRNA synthetase family. Type-1 seryl-tRNA synthetase subfamily. In terms of assembly, homodimer. The tRNA molecule binds across the dimer.

The protein resides in the cytoplasm. The catalysed reaction is tRNA(Ser) + L-serine + ATP = L-seryl-tRNA(Ser) + AMP + diphosphate + H(+). It catalyses the reaction tRNA(Sec) + L-serine + ATP = L-seryl-tRNA(Sec) + AMP + diphosphate + H(+). The protein operates within aminoacyl-tRNA biosynthesis; selenocysteinyl-tRNA(Sec) biosynthesis; L-seryl-tRNA(Sec) from L-serine and tRNA(Sec): step 1/1. Its function is as follows. Catalyzes the attachment of serine to tRNA(Ser). Is also able to aminoacylate tRNA(Sec) with serine, to form the misacylated tRNA L-seryl-tRNA(Sec), which will be further converted into selenocysteinyl-tRNA(Sec). This is Serine--tRNA ligase from Prochlorococcus marinus subsp. pastoris (strain CCMP1986 / NIES-2087 / MED4).